The chain runs to 271 residues: Thiazole synthase (271 aa).

The Schiff-base intermediate with DXP role is filled by Lys95. 1-deoxy-D-xylulose 5-phosphate-binding positions include Gly156, 182-183 (AG), and 204-205 (NT).

It belongs to the ThiG family. As to quaternary structure, homotetramer. Forms heterodimers with either ThiH or ThiS.

Its subcellular location is the cytoplasm. The enzyme catalyses [ThiS sulfur-carrier protein]-C-terminal-Gly-aminoethanethioate + 2-iminoacetate + 1-deoxy-D-xylulose 5-phosphate = [ThiS sulfur-carrier protein]-C-terminal Gly-Gly + 2-[(2R,5Z)-2-carboxy-4-methylthiazol-5(2H)-ylidene]ethyl phosphate + 2 H2O + H(+). It functions in the pathway cofactor biosynthesis; thiamine diphosphate biosynthesis. Its function is as follows. Catalyzes the rearrangement of 1-deoxy-D-xylulose 5-phosphate (DXP) to produce the thiazole phosphate moiety of thiamine. Sulfur is provided by the thiocarboxylate moiety of the carrier protein ThiS. In vitro, sulfur can be provided by H(2)S. In Yersinia pestis, this protein is Thiazole synthase.